A 304-amino-acid chain; its full sequence is MSSTLSVPAQAPETGTARVKRGMAEQLKGGVIMDVVTPEQAKIAEDAGAVAVMALERVPADIRKDGGVARMSDPDMIEGIISAVSIPVMAKSRIGHFVEAQVLQSLGVDYIDESEVLTPADEVNHSDKWAFTTPFVCGATNLGEALRRIAEGAAMIRSKGEAGTGNVVEAVRHLRQIKNEIARLRGYDNNELYAAAKELRAPYEIVKEVAELGKLPVVLFSAGGVATPADAALMRQLGAEGVFVGSGIFKSGDPAKRAAAIVKATTFYDDPKIIADASRNLGEAMVGINCDTLPEAERYANRGW.

Aspartate 34 contributes to the D-ribose 5-phosphate binding site. The active-site Schiff-base intermediate with D-ribose 5-phosphate is the lysine 91. Glycine 163 lines the D-ribose 5-phosphate pocket. Arginine 175 is a D-glyceraldehyde 3-phosphate binding site. Residues glycine 224 and 245–246 (GS) each bind D-ribose 5-phosphate.

Belongs to the PdxS/SNZ family. In the presence of PdxT, forms a dodecamer of heterodimers.

The catalysed reaction is aldehydo-D-ribose 5-phosphate + D-glyceraldehyde 3-phosphate + L-glutamine = pyridoxal 5'-phosphate + L-glutamate + phosphate + 3 H2O + H(+). It participates in cofactor biosynthesis; pyridoxal 5'-phosphate biosynthesis. Catalyzes the formation of pyridoxal 5'-phosphate from ribose 5-phosphate (RBP), glyceraldehyde 3-phosphate (G3P) and ammonia. The ammonia is provided by the PdxT subunit. Can also use ribulose 5-phosphate and dihydroxyacetone phosphate as substrates, resulting from enzyme-catalyzed isomerization of RBP and G3P, respectively. This Streptomyces avermitilis (strain ATCC 31267 / DSM 46492 / JCM 5070 / NBRC 14893 / NCIMB 12804 / NRRL 8165 / MA-4680) protein is Pyridoxal 5'-phosphate synthase subunit PdxS.